The primary structure comprises 226 residues: Adenylate kinase (226 aa).

An ATP-binding site is contributed by 12 to 17; sequence GSGKGT. An NMP region spans residues 32–61; that stretch reads ESGAIFREHIGGGTELGLKAKEYIERGDLV. AMP contacts are provided by residues Ser33, Arg38, 59–61, 87–90, and Gln94; these read DLV and GFPR. The tract at residues 128–171 is LID; it reads GRRLCVNDNNHPNHIAFEAIKPVEKDGKLVCRVCGGDLKTRPDD. Arg129 contacts ATP. 2 residues coordinate AMP: Arg168 and Arg180. Ala213 contacts ATP.

This sequence belongs to the adenylate kinase family. As to quaternary structure, monomer.

It localises to the cytoplasm. It catalyses the reaction AMP + ATP = 2 ADP. The protein operates within purine metabolism; AMP biosynthesis via salvage pathway; AMP from ADP: step 1/1. Its function is as follows. Catalyzes the reversible transfer of the terminal phosphate group between ATP and AMP. Plays an important role in cellular energy homeostasis and in adenine nucleotide metabolism. The polypeptide is Adenylate kinase (Desulfotalea psychrophila (strain LSv54 / DSM 12343)).